We begin with the raw amino-acid sequence, 192 residues long: Elongation factor P (192 aa).

Belongs to the elongation factor P family.

It localises to the cytoplasm. Its pathway is protein biosynthesis; polypeptide chain elongation. In terms of biological role, involved in peptide bond synthesis. Stimulates efficient translation and peptide-bond synthesis on native or reconstituted 70S ribosomes in vitro. Probably functions indirectly by altering the affinity of the ribosome for aminoacyl-tRNA, thus increasing their reactivity as acceptors for peptidyl transferase. The polypeptide is Elongation factor P (Borrelia hermsii (strain HS1 / DAH)).